Consider the following 31-residue polypeptide: Cytochrome b6-f complex subunit 6 (31 aa).

A helical membrane pass occupies residues 4 to 24; the sequence is VVSYLGILAAFALVTIGIFLV.

The protein belongs to the PetL family. The 4 large subunits of the cytochrome b6-f complex are cytochrome b6, subunit IV (17 kDa polypeptide, PetD), cytochrome f and the Rieske protein, while the 4 small subunits are PetG, PetL, PetM and PetN. The complex functions as a dimer.

It localises to the plastid. The protein resides in the chloroplast thylakoid membrane. Component of the cytochrome b6-f complex, which mediates electron transfer between photosystem II (PSII) and photosystem I (PSI), cyclic electron flow around PSI, and state transitions. PetL is important for photoautotrophic growth as well as for electron transfer efficiency and stability of the cytochrome b6-f complex. The polypeptide is Cytochrome b6-f complex subunit 6 (Mesostigma viride (Green alga)).